A 136-amino-acid polypeptide reads, in one-letter code: Histone H3.2 (136 aa).

Residues 1–43 (MARTKQTARKSTGGKAPRKQLATKAARKSAPATGGVKKPHRFR) form a disordered region. N6,N6,N6-trimethyllysine; alternate is present on residues Lys5 and Lys10. N6,N6-dimethyllysine; alternate is present on residues Lys5 and Lys10. An N6-methyllysine; alternate mark is found at Lys5 and Lys10. N6-acetyllysine; alternate is present on Lys10. The residue at position 11 (Ser11) is a Phosphoserine. Residue Thr12 is modified to Phosphothreonine. Position 15 is an N6-acetyllysine (Lys15). N6-methyllysine; alternate occurs at positions 19, 24, and 28. N6-acetyllysine; alternate occurs at positions 19 and 24. Lys28 is modified (N6,N6,N6-trimethyllysine; alternate). Lys28 bears the N6,N6-dimethyllysine; alternate mark. Phosphoserine is present on Ser29. At Lys37 the chain carries N6,N6,N6-trimethyllysine; alternate. The residue at position 37 (Lys37) is an N6,N6-dimethyllysine; alternate. Lys37 bears the N6-methyllysine; alternate mark.

It belongs to the histone H3 family. The nucleosome is a histone octamer containing two molecules each of H2A, H2B, H3 and H4 assembled in one H3-H4 heterotetramer and two H2A-H2B heterodimers. The octamer wraps approximately 147 bp of DNA. Post-translationally, acetylation is generally linked to gene activation. Can be acetylated to form H3K9ac, H3K14ac, H3K18ac and H3K23ac. H3K9ac could compete with H3K9me and prevent gene silencing. H3K9ac is restricted to euchromatin. Methylated to form mainly H3K4me, H3K9me, H3K18me, H3K23me, H3K27me and H3K36me. H3K4me1/2/3, H3K9me3, H3K27me3 and H3K36me1/2/3 are typical marks for euchromatin, whereas heterochromatic chromocenters are enriched in H3K9me1/2 and H3K27me1/2. H2BK143ub1 is probably prerequisite for H3K4me. In terms of processing, can be phosphorylated to form H3S10ph, H3T11ph and H3S28ph.

The protein localises to the nucleus. It localises to the chromosome. Core component of nucleosome. Nucleosomes wrap and compact DNA into chromatin, limiting DNA accessibility to the cellular machineries which require DNA as a template. Histones thereby play a central role in transcription regulation, DNA repair, DNA replication and chromosomal stability. DNA accessibility is regulated via a complex set of post-translational modifications of histones, also called histone code, and nucleosome remodeling. In Brassica napus (Rape), this protein is Histone H3.2.